Reading from the N-terminus, the 233-residue chain is Urease accessory protein UreF (233 aa).

The protein belongs to the UreF family. As to quaternary structure, ureD, UreF and UreG form a complex that acts as a GTP-hydrolysis-dependent molecular chaperone, activating the urease apoprotein by helping to assemble the nickel containing metallocenter of UreC. The UreE protein probably delivers the nickel.

The protein localises to the cytoplasm. Required for maturation of urease via the functional incorporation of the urease nickel metallocenter. This chain is Urease accessory protein UreF, found in Polaromonas sp. (strain JS666 / ATCC BAA-500).